The primary structure comprises 463 residues: Probable Xaa-Pro aminopeptidase pepP (463 aa).

Residues D259, D270, E393, and E433 each contribute to the Mn(2+) site.

The protein belongs to the peptidase M24B family. It depends on Mn(2+) as a cofactor.

The catalysed reaction is Release of any N-terminal amino acid, including proline, that is linked to proline, even from a dipeptide or tripeptide.. Functionally, catalyzes the removal of a penultimate prolyl residue from the N-termini of peptides. The sequence is that of Probable Xaa-Pro aminopeptidase pepP (pepP) from Pyrenophora tritici-repentis (strain Pt-1C-BFP) (Wheat tan spot fungus).